The following is a 362-amino-acid chain: Probable secreted beta-glucosidase UTH1 (362 aa).

The signal sequence occupies residues 1–17 (MKLSALLALSASTAVLA).

It belongs to the SUN family.

It is found in the mitochondrion outer membrane. It localises to the secreted. Its subcellular location is the cell wall. Its function is as follows. Involved in aging, oxidative stress response, and in the regulation of mitochondrial biogenesis. Inactivation of UTH1 increases life span, leads to higher resistance to heat stress and to hydrogen peroxide, and increases sensitivity to the superoxide radical-generating drug paraquat and to copper. Also required for the selective autophagic degradation of mitochondria (mitophagy) in response to nitrogen starvation. May play a role in cell wall morphogenesis and septation. Involved in the remodeling of the cell wall during the various phases of yeast culture development and under various environmental conditions and plays a role in septation. Involved in cell sensitivity to boric acid. In Saccharomyces cerevisiae (strain YJM789) (Baker's yeast), this protein is Probable secreted beta-glucosidase UTH1 (UTH1).